The primary structure comprises 489 residues: MTFRNCVAVDLGASSGRVMLARYERECRSLTLREIHRFNNGLHSQNGYVTWNVDSLESAIRLGLNKVCEEGIRIDSIGIDTWGVDFVLLDQHGQRVGLPVAYRDSRTNGLMAQAQQQLGKRDIYQRSGIQFLPFNTIYQLRALTEQQPELIPHIAHALLIPDYFSYRLTGKMNWEYTNATTTQLVNINSDDWDESLLAWSGANKAWFGRPTHPGNVIGHWICPQGNEIPVVAVASHDTASAVIASPLNGSRAAYLSSGTWSLMGFESQTPFTNDTALAANITNEGGAEGRYRVLKNIMGLWLLQRVLQERQINDLPALIAATQALPACRFIINPNDDRFINPDEMCSEIQAACRETAQPIPENDAELARCIFDSLALLYADVLHELAQLRGEDFSQLHIVGGGCQNTLLNQLCADACGIRVIAGPVEASTLGNIGIQLMTLDELNNVDDFRQVVSTTANLTTFTPNPDSEIAHYVAQIHSTRQTKELCA.

ATP is bound at residue A13–R17. Cysteines 68 and 222 form a disulfide. Residues G83 and H236–T238 each bind substrate. The Proton acceptor role is filled by D237. An ATP-binding site is contributed by T259. N296 contacts substrate. Q304 contributes to the ATP binding site. A disulfide bridge connects residues C353 and C370. G402 contributes to the ATP binding site. C413 and C417 are oxidised to a cystine.

This sequence belongs to the rhamnulokinase family. As to quaternary structure, monomer. Requires Mg(2+) as cofactor.

It carries out the reaction L-rhamnulose + ATP = L-rhamnulose 1-phosphate + ADP + H(+). It participates in carbohydrate degradation; L-rhamnose degradation; glycerone phosphate from L-rhamnose: step 2/3. Involved in the catabolism of L-rhamnose (6-deoxy-L-mannose). Catalyzes the transfer of the gamma-phosphate group from ATP to the 1-hydroxyl group of L-rhamnulose to yield L-rhamnulose 1-phosphate. This is Rhamnulokinase from Escherichia coli O127:H6 (strain E2348/69 / EPEC).